Reading from the N-terminus, the 432-residue chain is Glutamate-1-semialdehyde 2,1-aminomutase (432 aa).

Position 271 is an N6-(pyridoxal phosphate)lysine (lysine 271).

It belongs to the class-III pyridoxal-phosphate-dependent aminotransferase family. HemL subfamily. As to quaternary structure, homodimer. The cofactor is pyridoxal 5'-phosphate.

It is found in the cytoplasm. It carries out the reaction (S)-4-amino-5-oxopentanoate = 5-aminolevulinate. The protein operates within porphyrin-containing compound metabolism; protoporphyrin-IX biosynthesis; 5-aminolevulinate from L-glutamyl-tRNA(Glu): step 2/2. Its pathway is porphyrin-containing compound metabolism; chlorophyll biosynthesis. The polypeptide is Glutamate-1-semialdehyde 2,1-aminomutase (Prochlorococcus marinus (strain MIT 9211)).